The primary structure comprises 515 residues: ATP synthase subunit alpha (515 aa).

171–178 contributes to the ATP binding site; the sequence is GDRQTGKT.

Belongs to the ATPase alpha/beta chains family. As to quaternary structure, F-type ATPases have 2 components, CF(1) - the catalytic core - and CF(0) - the membrane proton channel. CF(1) has five subunits: alpha(3), beta(3), gamma(1), delta(1), epsilon(1). CF(0) has three main subunits: a(1), b(2) and c(9-12). The alpha and beta chains form an alternating ring which encloses part of the gamma chain. CF(1) is attached to CF(0) by a central stalk formed by the gamma and epsilon chains, while a peripheral stalk is formed by the delta and b chains.

The protein resides in the cell inner membrane. It catalyses the reaction ATP + H2O + 4 H(+)(in) = ADP + phosphate + 5 H(+)(out). Functionally, produces ATP from ADP in the presence of a proton gradient across the membrane. The alpha chain is a regulatory subunit. This is ATP synthase subunit alpha from Xylella fastidiosa (strain M12).